We begin with the raw amino-acid sequence, 316 residues long: UDP-N-acetylenolpyruvoylglucosamine reductase (316 aa).

Residues 30–194 form the FAD-binding PCMH-type domain; the sequence is VGGEADYLVF…LSVKFALAPG (165 aa). Residue Arg-173 is part of the active site. The Proton donor role is filled by Ser-223. Glu-293 is an active-site residue.

This sequence belongs to the MurB family. The cofactor is FAD.

It is found in the cytoplasm. The catalysed reaction is UDP-N-acetyl-alpha-D-muramate + NADP(+) = UDP-N-acetyl-3-O-(1-carboxyvinyl)-alpha-D-glucosamine + NADPH + H(+). Its pathway is cell wall biogenesis; peptidoglycan biosynthesis. Cell wall formation. The sequence is that of UDP-N-acetylenolpyruvoylglucosamine reductase from Streptococcus pneumoniae serotype 19F (strain G54).